The sequence spans 280 residues: Pantothenate synthetase (280 aa).

An ATP-binding site is contributed by 26–33; it reads MGNLHEGH. The Proton donor role is filled by His-33. Gln-57 serves as a coordination point for (R)-pantoate. Gln-57 lines the beta-alanine pocket. ATP is bound at residue 145–148; that stretch reads GKKD. Gln-151 provides a ligand contact to (R)-pantoate. Residues Val-174 and 182–185 each bind ATP; that span reads LSSR.

This sequence belongs to the pantothenate synthetase family. Homodimer.

It is found in the cytoplasm. It carries out the reaction (R)-pantoate + beta-alanine + ATP = (R)-pantothenate + AMP + diphosphate + H(+). It participates in cofactor biosynthesis; (R)-pantothenate biosynthesis; (R)-pantothenate from (R)-pantoate and beta-alanine: step 1/1. Its function is as follows. Catalyzes the condensation of pantoate with beta-alanine in an ATP-dependent reaction via a pantoyl-adenylate intermediate. The polypeptide is Pantothenate synthetase (Bordetella avium (strain 197N)).